A 128-amino-acid polypeptide reads, in one-letter code: Large ribosomal subunit protein bL21 (128 aa).

A disordered region spans residues 104–128 (GKTPTVGPRPKKEKVVEPAEGEGDH). A compositionally biased stretch (basic and acidic residues) spans 116 to 128 (EKVVEPAEGEGDH).

It belongs to the bacterial ribosomal protein bL21 family. As to quaternary structure, part of the 50S ribosomal subunit. Contacts protein L20.

This protein binds to 23S rRNA in the presence of protein L20. The polypeptide is Large ribosomal subunit protein bL21 (Nitrobacter hamburgensis (strain DSM 10229 / NCIMB 13809 / X14)).